The following is a 426-amino-acid chain: Histidine--tRNA ligase (426 aa).

The protein belongs to the class-II aminoacyl-tRNA synthetase family. In terms of assembly, homodimer.

Its subcellular location is the cytoplasm. The catalysed reaction is tRNA(His) + L-histidine + ATP = L-histidyl-tRNA(His) + AMP + diphosphate + H(+). The protein is Histidine--tRNA ligase of Streptococcus thermophilus (strain CNRZ 1066).